The primary structure comprises 411 residues: Methylthioribose-1-phosphate isomerase (411 aa).

The Proton donor role is filled by Asp-284.

The protein belongs to the eIF-2B alpha/beta/delta subunits family. MtnA subfamily.

The protein localises to the cytoplasm. It is found in the nucleus. The enzyme catalyses 5-(methylsulfanyl)-alpha-D-ribose 1-phosphate = 5-(methylsulfanyl)-D-ribulose 1-phosphate. The protein operates within amino-acid biosynthesis; L-methionine biosynthesis via salvage pathway; L-methionine from S-methyl-5-thio-alpha-D-ribose 1-phosphate: step 1/6. In terms of biological role, catalyzes the interconversion of methylthioribose-1-phosphate (MTR-1-P) into methylthioribulose-1-phosphate (MTRu-1-P). The sequence is that of Methylthioribose-1-phosphate isomerase from Komagataella phaffii (strain GS115 / ATCC 20864) (Yeast).